The chain runs to 118 residues: Large ribosomal subunit protein bL19 (118 aa).

This sequence belongs to the bacterial ribosomal protein bL19 family.

In terms of biological role, this protein is located at the 30S-50S ribosomal subunit interface and may play a role in the structure and function of the aminoacyl-tRNA binding site. This Campylobacter fetus subsp. fetus (strain 82-40) protein is Large ribosomal subunit protein bL19.